We begin with the raw amino-acid sequence, 336 residues long: GTPase Obg (336 aa).

In terms of domain architecture, Obg spans 1–159 (MKFVDEATLI…KTLKLELKLL (159 aa)). Residues 160 to 329 (ADVGLVGLPN…LIEAIFAQLR (170 aa)) form the OBG-type G domain. GTP contacts are provided by residues 166–173 (GLPNAGKS), 191–195 (FTTLA), 213–216 (DIPG), 283–286 (NKMD), and 310–312 (SAI). S173 and T193 together coordinate Mg(2+).

This sequence belongs to the TRAFAC class OBG-HflX-like GTPase superfamily. OBG GTPase family. In terms of assembly, monomer. The cofactor is Mg(2+).

Its subcellular location is the cytoplasm. An essential GTPase which binds GTP, GDP and possibly (p)ppGpp with moderate affinity, with high nucleotide exchange rates and a fairly low GTP hydrolysis rate. Plays a role in control of the cell cycle, stress response, ribosome biogenesis and in those bacteria that undergo differentiation, in morphogenesis control. The protein is GTPase Obg of Desulfatibacillum aliphaticivorans.